We begin with the raw amino-acid sequence, 230 residues long: LexA repressor (230 aa).

Residues 28–48 (LREIGAHMGIRSTNGVNDHLR) constitute a DNA-binding region (H-T-H motif). Active-site for autocatalytic cleavage activity residues include Ser-149 and Lys-186.

It belongs to the peptidase S24 family. In terms of assembly, homodimer.

It catalyses the reaction Hydrolysis of Ala-|-Gly bond in repressor LexA.. In terms of biological role, represses a number of genes involved in the response to DNA damage (SOS response), including recA and lexA. In the presence of single-stranded DNA, RecA interacts with LexA causing an autocatalytic cleavage which disrupts the DNA-binding part of LexA, leading to derepression of the SOS regulon and eventually DNA repair. In Sorangium cellulosum (strain So ce56) (Polyangium cellulosum (strain So ce56)), this protein is LexA repressor.